Reading from the N-terminus, the 507-residue chain is Cytochrome P450 monooxygenase ptmU (507 aa).

A helical membrane pass occupies residues 4–24 (VNAWWVGGSLLLGIWAIVVFF). N98, N202, and N398 each carry an N-linked (GlcNAc...) asparagine glycan. Residue C444 coordinates heme.

Belongs to the cytochrome P450 family. Heme is required as a cofactor.

The protein localises to the membrane. It functions in the pathway secondary metabolite biosynthesis. In terms of biological role, cytochrome P450 monooxygenase; part of the gene cluster that mediates the biosynthesis of the indole diterpenes penitrems. The geranylgeranyl diphosphate (GGPP) synthase ptmG catalyzes the first step in penitrem biosynthesis via conversion of farnesyl pyrophosphate and isopentyl pyrophosphate into geranylgeranyl pyrophosphate (GGPP). Condensation of indole-3-glycerol phosphate with GGPP by the prenyl transferase ptmC then forms 3-geranylgeranylindole (3-GGI). Epoxidation by the FAD-dependent monooxygenase ptmM leads to a epoxidized-GGI that is substrate of the terpene cyclase ptmB for cyclization to yield paspaline. Paspaline is subsequently converted to 13-desoxypaxilline by the cytochrome P450 monooxygenase ptmP, the latter being then converted to paxilline by the cytochrome P450 monooxygenase ptmQ. Paxilline is converted to beta-paxitriol via C-10 ketoreduction by the short-chain dehydrogenase ptmH which can be monoprenylated at the C-20 by the indole diterpene prenyltransferase ptmD. A two-step elimination (acetylation and elimination) process performed by the O-acetyltransferase ptmV and ptmI leads to the production of the prenylated form of penijanthine. The FAD-linked oxidoreductase ptmO then converts the prenylated form of penijanthine into PC-M5 which is in turn transformed into PC-M4 by the aromatic dimethylallyltransferase ptmE. Five sequential oxidative transformations performed by the cytochrome P450 monooxygenases ptmK, ptmU, ptmL, ptmN and ptmJ yield the various penitrem compounds. PtmK, ptmU and ptmM are involved in the formation of the key bicyclic ring of penitrem C via the formation of the intermediates secopenitrem D and penitrem D. PtmL catalyzes the epoxidation of penitrem D and C to yield penitrem B and F, respectively. PtmJ catalyzes the last benzylic hydroxylation to convert penitrem B to prenitrem E and penitrem F to penitrem A. The chain is Cytochrome P450 monooxygenase ptmU from Penicillium ochrochloron.